Reading from the N-terminus, the 778-residue chain is Glutathione biosynthesis bifunctional protein GshAB (778 aa).

The segment at 1–354 is glutamate--cysteine ligase; the sequence is MVNLDKGLLK…EEFFKNHDMV (354 aa). The ATP-grasp domain occupies 521–777; it reads KDILRENNIR…AGEKILDLLF (257 aa). 548 to 606 serves as a coordination point for ATP; the sequence is RLFKDEKIVIKPKSTNFGLGISIFPGEYSREDYDKAVEIAFREDSSILIEEFMTGKEYR. Mg(2+) contacts are provided by Asp728, Glu747, and Asn749. The Mn(2+) site is built by Asp728, Glu747, and Asn749.

The protein in the N-terminal section; belongs to the glutamate--cysteine ligase type 1 family. Type 2 subfamily. In terms of assembly, monomer. It depends on Mg(2+) as a cofactor. The cofactor is Mn(2+).

It carries out the reaction L-cysteine + L-glutamate + ATP = gamma-L-glutamyl-L-cysteine + ADP + phosphate + H(+). The catalysed reaction is gamma-L-glutamyl-L-cysteine + glycine + ATP = glutathione + ADP + phosphate + H(+). The protein operates within sulfur metabolism; glutathione biosynthesis; glutathione from L-cysteine and L-glutamate: step 1/2. It participates in sulfur metabolism; glutathione biosynthesis; glutathione from L-cysteine and L-glutamate: step 2/2. In terms of biological role, synthesizes glutathione from L-glutamate and L-cysteine via gamma-L-glutamyl-L-cysteine. In Clostridium perfringens (strain 13 / Type A), this protein is Glutathione biosynthesis bifunctional protein GshAB.